Here is a 1531-residue protein sequence, read N- to C-terminus: MDVSQFAESKGVKTALEAAALAAANTALRNARVVTPYLTQQQTKNLLELFRGAQLRFEPRDNWAHPVQRVVHDALEQYVRRAAGPNCLEVGAHPRSINRHQASHRCFLPPVGRDEQRWQVAPRRGLCNLIRRALLNGVKVAREFCQLGFGACSHQCEVGIALYSLHDMRPADVACAMARHNMRTMYVVLHLPEEAMLPPGSYSNKFYNTVNTADKCIITYADDSCAGYVHKREVLQDWITTTGVSGRHPMLIERVRAIGCHFVLLCTATQPCPMPYTPYPSSNTVYVRNVYGPALGAGLFTPKCCVDATFYPVPRRVWQRLMMFGTTLDDDAFCCSRLLTYLRGISTKVTVGNIVANEGWQPEEQQLTAVAIAAYLTVCHQRWVRTQGIARGVRRLQAEHAQQFWFKVWELFTNTGTVPGYSAGFYRQLATWISGGLTIDFERRVFDKRVKCGCCCVCERRPADPGCLCIDDFPDGANGLVKLKKWPIRAGTKSAVSKWAQVRVRADSTEDLIDLSVPKLLTLKELAAAAIRKQPSAPPSLHILDRRPVGDPRRPVNCAPPAVSAGPVPAPPGNPVIESVQGSGAGGPEVSESQPGLTPTREVTNMPLPPQRGQEEVLAVLPSGARVIVGNLLDVAADWLVNPANRDHQPGGGLCGMFHRRWPHLWPVCGEVQDLPTGPVIFQQGPPKVIHAPGPDYRIKPDPDGLRRVYAVVHQAHGTVASPLISAGIYRAPARESFEAWAATARDGDLLVVQRSMAQHIRDFVLNEGRHRPRELHVDRAMADMVNYGLATEPEPYNELVKGVEVAPMTVKYALIAGVPGSGKSSSVDHRGAVVITPTKTLAREWSARGATAVTPHVAASAAPEGRVIVDEAYAIPPHLLVASLRRARDVVMLGDPHQIPALDFDGRCLTSAVDLGLQPTSWRTVSHRCPWDVCIFLRTDYPTITTTSRVLRSVVFTGETIGQKIVFTQVAKQSNPGSITVHEAQGSTFDQTTIIATLDARGLIASSRAHAIVALTRHRERCSVIDVGGVLVEIGVTDAMFNNIEMQLVRPDAAAPAGVLRAPDDTVDGLLDIPPAHTDVAAVLTAEAIGHAPLELAAINPPGPVLEQGLLYMPARLDGRDEVVKLQLSDTVHCRLAAPTSRLAVINTLVGRYGKATKLPEVEYDLMDTIAQFWHHIGPINPSTLEYAEMCEAMLSKGQDGSLIVHLDLQDADCSRITFFQKDCAKFTLDDPVAHGKVGQGISAWPKTLCALFGPWFRAIEKHLVAGLPPGYYYGDLYTEADLHRSVLCAPAGHLVFENDFSEFDSTQNNVSLDLECELMRRFGMPDWMVALYHLVRSYWLLVAPKEALRGCWKKHSGEPGTLLWNTVWNMTVLHHVYEFDRPSVLCFKGDDSVVVCESVRARPEGVSLVADCGLKMKDKTGPCGAFSNLLIFPGAGVVCDLLRQWGRLTDKNWGPDIQRMQDLEQACKDFVARVVTQGKEMLTIQLVAGYYGVEVGMVEVVWGALKACAAARETLVTNRLPVLNLSKED.

One can recognise an Alphavirus-like MT domain in the interval 56 to 239 (RFEPRDNWAH…HKREVLQDWI (184 aa)). The tract at residues 60-239 (RDNWAHPVQR…HKREVLQDWI (180 aa)) is methyltransferase. Positions 240–434 (TTTGVSGRHP…FYRQLATWIS (195 aa)) are Y-domain. Residues 435–621 (GGLTIDFERR…RGQEEVLAVL (187 aa)) are putative protease. The disordered stretch occupies residues 561–600 (PAVSAGPVPAPPGNPVIESVQGSGAGGPEVSESQPGLTPT). The span at 591-600 (SESQPGLTPT) shows a compositional bias: polar residues. The 150-residue stretch at 612 to 761 (RGQEEVLAVL…VVQRSMAQHI (150 aa)) folds into the Macro domain. The interval 622 to 786 (PSGARVIVGN…HVDRAMADMV (165 aa)) is X-domain. Positions 786–924 (VNYGLATEPE…DLGLQPTSWR (139 aa)) constitute a (+)RNA virus helicase ATP-binding domain. The tract at residues 803–1046 (GVEVAPMTVK…VTDAMFNNIE (244 aa)) is NTPase/helicase. 818–825 (GVPGSGKS) provides a ligand contact to ATP. Positions 925 to 1058 (TVSHRCPWDV…LVRPDAAAPA (134 aa)) constitute a (+)RNA virus helicase C-terminal domain. The tract at residues 1049 to 1531 (LVRPDAAAPA…LPVLNLSKED (483 aa)) is RNA-directed RNA polymerase. The RdRp catalytic domain maps to 1295–1406 (HLVFENDFSE…VCESVRARPE (112 aa)).

This sequence belongs to the hepevirus non-structural polyprotein family. In terms of assembly, the protease domain interacts with host EIF2AK4 (via C-terminus); this interaction inhibits dimerization of EIF2AK4 and prevents EIF2AK4-mediated phosphorylation of host EIF2A. Mg(2+) is required as a cofactor. ORF1 polyprotein does not seem to be processed into distinct enzymatic domains by a viral protease belonging to ORF1, but could be processed by a host serine protease like thrombin.

The protein localises to the host cytoplasm. It is found in the host perinuclear region. The catalysed reaction is RNA(n) + a ribonucleoside 5'-triphosphate = RNA(n+1) + diphosphate. It carries out the reaction GTP + S-adenosyl-L-methionine = N(7)-methyl-GTP + S-adenosyl-L-homocysteine. Methyltransferase: Displays a capping enzyme activity. This function is necessary since all viral RNAs are synthesized in the cytoplasm, and host capping enzymes are restricted to the nucleus. The enzymatic reaction involves a covalent link between 7-methyl-GMP and the methyltransferase, whereas eukaryotic capping enzymes form a covalent complex only with GMP. Methyltransferase catalyzes transfer of a methyl group from S-adenosylmethionine to GTP and GDP to yield m(7)GTP or m(7)GDP. This enzyme also displays guanylyltransferase activity to form a covalent complex, methyltransferase-m(7)GMP, from which 7-methyl-GMP is transferred to the mRNA to create the cap structure. In terms of biological role, Y-domain: Indispensable for virus replication. Its function is as follows. Putative protease: The putative protease domain although necessary for replication of the virus may not be a protease but rather a structural Zn(2+)-binding domain. Inhibits induction of IFN-beta by MDA5 and RIG-I pathways and down-regulates the expression of MDA5. Functionally, NTPase/helicase: Multi-functional protein that exhibits NTPase and RNA unwinding activities. Hydrolyzes all NTPs efficiently and unwinds RNA duplexes containing 5' overhangs. Possesses a sequence independent RNA-5'-triphosphatase (RTPase) activity suggestive of its role in forming viral cap structure. Also participates in viral genome replication, RNA translocation and genome packaging/unpackaging. RNA-directed RNA polymerase: Plays an essential role in the virus replication. Binds to the 3'-end of the genomic RNA to initiate viral replication. The polypeptide is Non-structural polyprotein pORF1 (Gallus gallus (Chicken)).